Here is a 271-residue protein sequence, read N- to C-terminus: NAD kinase (271 aa).

Residue aspartate 64 is the Proton acceptor of the active site. NAD(+) contacts are provided by residues 64–65 (DG), arginine 69, 132–133 (NE), lysine 143, arginine 160, aspartate 162, 173–178 (TAYAMS), alanine 197, and glutamine 231.

Belongs to the NAD kinase family. The cofactor is a divalent metal cation.

Its subcellular location is the cytoplasm. It catalyses the reaction NAD(+) + ATP = ADP + NADP(+) + H(+). In terms of biological role, involved in the regulation of the intracellular balance of NAD and NADP, and is a key enzyme in the biosynthesis of NADP. Catalyzes specifically the phosphorylation on 2'-hydroxyl of the adenosine moiety of NAD to yield NADP. In Methanocorpusculum labreanum (strain ATCC 43576 / DSM 4855 / Z), this protein is NAD kinase.